Reading from the N-terminus, the 199-residue chain is Recombination protein RecR (199 aa).

The segment at C58–C73 adopts a C4-type zinc-finger fold. The Toprim domain occupies S81–P176.

Belongs to the RecR family.

Functionally, may play a role in DNA repair. It seems to be involved in an RecBC-independent recombinational process of DNA repair. It may act with RecF and RecO. The chain is Recombination protein RecR from Clostridioides difficile (strain 630) (Peptoclostridium difficile).